A 90-amino-acid chain; its full sequence is Acylphosphatase (90 aa).

In terms of domain architecture, Acylphosphatase-like spans 4–90 (RMYVKVYGIV…KGEFNNFDTY (87 aa)). Catalysis depends on residues arginine 19 and asparagine 37.

Belongs to the acylphosphatase family.

The enzyme catalyses an acyl phosphate + H2O = a carboxylate + phosphate + H(+). In Sulfurisphaera tokodaii (strain DSM 16993 / JCM 10545 / NBRC 100140 / 7) (Sulfolobus tokodaii), this protein is Acylphosphatase (acyP).